The following is a 208-amino-acid chain: V-type ATP synthase subunit E (208 aa).

It belongs to the V-ATPase E subunit family.

Functionally, produces ATP from ADP in the presence of a proton gradient across the membrane. In Chlamydia felis (strain Fe/C-56) (Chlamydophila felis), this protein is V-type ATP synthase subunit E.